Here is an 857-residue protein sequence, read N- to C-terminus: Leucine--tRNA ligase (857 aa).

Residues 42 to 52 (PYPSGNLHMGH) carry the 'HIGH' region motif. The 'KMSKS' region motif lies at 615 to 619 (KMSKS). Lys-618 serves as a coordination point for ATP.

This sequence belongs to the class-I aminoacyl-tRNA synthetase family.

The protein resides in the cytoplasm. It carries out the reaction tRNA(Leu) + L-leucine + ATP = L-leucyl-tRNA(Leu) + AMP + diphosphate. In Thermosynechococcus vestitus (strain NIES-2133 / IAM M-273 / BP-1), this protein is Leucine--tRNA ligase.